The chain runs to 286 residues: Lipoyl synthase (286 aa).

C38, C43, C49, C64, C68, C71, and S276 together coordinate [4Fe-4S] cluster. Positions W50–L265 constitute a Radical SAM core domain.

It belongs to the radical SAM superfamily. Lipoyl synthase family. [4Fe-4S] cluster serves as cofactor.

It is found in the cytoplasm. The catalysed reaction is [[Fe-S] cluster scaffold protein carrying a second [4Fe-4S](2+) cluster] + N(6)-octanoyl-L-lysyl-[protein] + 2 oxidized [2Fe-2S]-[ferredoxin] + 2 S-adenosyl-L-methionine + 4 H(+) = [[Fe-S] cluster scaffold protein] + N(6)-[(R)-dihydrolipoyl]-L-lysyl-[protein] + 4 Fe(3+) + 2 hydrogen sulfide + 2 5'-deoxyadenosine + 2 L-methionine + 2 reduced [2Fe-2S]-[ferredoxin]. The protein operates within protein modification; protein lipoylation via endogenous pathway; protein N(6)-(lipoyl)lysine from octanoyl-[acyl-carrier-protein]: step 2/2. Functionally, catalyzes the radical-mediated insertion of two sulfur atoms into the C-6 and C-8 positions of the octanoyl moiety bound to the lipoyl domains of lipoate-dependent enzymes, thereby converting the octanoylated domains into lipoylated derivatives. The sequence is that of Lipoyl synthase from Karelsulcia muelleri (strain GWSS) (Sulcia muelleri).